Here is a 360-residue protein sequence, read N- to C-terminus: Peptide chain release factor 1 (360 aa).

Residue Q235 is modified to N5-methylglutamine. Residues 284-313 are disordered; sequence AKRQQAEASTRRNLLGSGDRSDRNRTYNFP.

It belongs to the prokaryotic/mitochondrial release factor family. Post-translationally, methylated by PrmC. Methylation increases the termination efficiency of RF1.

It is found in the cytoplasm. Its function is as follows. Peptide chain release factor 1 directs the termination of translation in response to the peptide chain termination codons UAG and UAA. The polypeptide is Peptide chain release factor 1 (Salmonella agona (strain SL483)).